The following is a 226-amino-acid chain: ATP-dependent dethiobiotin synthetase BioD (226 aa).

Residue Gly14–Phe19 participates in ATP binding. Position 18 (Thr18) interacts with Mg(2+). Lys39 is an active-site residue. Residue Ser43 participates in substrate binding. ATP is bound by residues Asp56, Glu117–Gly120, Asn177–Thr178, Pro206–Ile208, and Asn213. Residues Asp56 and Glu117 each contribute to the Mg(2+) site.

This sequence belongs to the dethiobiotin synthetase family. Homodimer. It depends on Mg(2+) as a cofactor.

It is found in the cytoplasm. The catalysed reaction is (7R,8S)-7,8-diammoniononanoate + CO2 + ATP = (4R,5S)-dethiobiotin + ADP + phosphate + 3 H(+). Its pathway is cofactor biosynthesis; biotin biosynthesis; biotin from 7,8-diaminononanoate: step 1/2. Functionally, catalyzes a mechanistically unusual reaction, the ATP-dependent insertion of CO2 between the N7 and N8 nitrogen atoms of 7,8-diaminopelargonic acid (DAPA, also called 7,8-diammoniononanoate) to form a ureido ring. The chain is ATP-dependent dethiobiotin synthetase BioD from Xylella fastidiosa (strain 9a5c).